Reading from the N-terminus, the 33-residue chain is Neutrophil defensin 3 (33 aa).

3 disulfide bridges follow: Cys-3–Cys-31, Cys-5–Cys-20, and Cys-10–Cys-30.

It belongs to the alpha-defensin family.

The protein localises to the secreted. Anti-fungal and bactericidal activity, greater against Gram-positive bacteria. The protein is Neutrophil defensin 3 of Mesocricetus auratus (Golden hamster).